Reading from the N-terminus, the 329-residue chain is DNA-directed RNA polymerase subunit alpha (329 aa).

The alpha N-terminal domain (alpha-NTD) stretch occupies residues 1–235; it reads MLGSVTDFLK…EQLDAFVDLR (235 aa). The segment at 249–329 is alpha C-terminal domain (alpha-CTD); that stretch reads FDPILLRPVD…NWPPASLADN (81 aa).

Belongs to the RNA polymerase alpha chain family. Homodimer. The RNAP catalytic core consists of 2 alpha, 1 beta, 1 beta' and 1 omega subunit. When a sigma factor is associated with the core the holoenzyme is formed, which can initiate transcription.

It catalyses the reaction RNA(n) + a ribonucleoside 5'-triphosphate = RNA(n+1) + diphosphate. DNA-dependent RNA polymerase catalyzes the transcription of DNA into RNA using the four ribonucleoside triphosphates as substrates. This is DNA-directed RNA polymerase subunit alpha from Tolumonas auensis (strain DSM 9187 / NBRC 110442 / TA 4).